Reading from the N-terminus, the 413-residue chain is Gamma-glutamyl phosphate reductase (413 aa).

This sequence belongs to the gamma-glutamyl phosphate reductase family.

The protein resides in the cytoplasm. It catalyses the reaction L-glutamate 5-semialdehyde + phosphate + NADP(+) = L-glutamyl 5-phosphate + NADPH + H(+). It functions in the pathway amino-acid biosynthesis; L-proline biosynthesis; L-glutamate 5-semialdehyde from L-glutamate: step 2/2. Its function is as follows. Catalyzes the NADPH-dependent reduction of L-glutamate 5-phosphate into L-glutamate 5-semialdehyde and phosphate. The product spontaneously undergoes cyclization to form 1-pyrroline-5-carboxylate. This chain is Gamma-glutamyl phosphate reductase, found in Thermus thermophilus (strain ATCC 27634 / DSM 579 / HB8).